A 251-amino-acid polypeptide reads, in one-letter code: uncharacterized protein (251 aa).

A divalent metal cation is bound by residues H5, H7, E101, H132, H163, and D209.

It belongs to the metallo-dependent hydrolases superfamily. TatD-type hydrolase family. The cofactor is a divalent metal cation.

This is an uncharacterized protein from Methanocaldococcus jannaschii (strain ATCC 43067 / DSM 2661 / JAL-1 / JCM 10045 / NBRC 100440) (Methanococcus jannaschii).